Consider the following 201-residue polypeptide: Adenylyl-sulfate kinase (201 aa).

Residue 35 to 42 (GLSGSGKS) participates in ATP binding. Serine 109 functions as the Phosphoserine intermediate in the catalytic mechanism.

This sequence belongs to the APS kinase family.

It carries out the reaction adenosine 5'-phosphosulfate + ATP = 3'-phosphoadenylyl sulfate + ADP + H(+). It functions in the pathway sulfur metabolism; hydrogen sulfide biosynthesis; sulfite from sulfate: step 2/3. Catalyzes the synthesis of activated sulfate. This Klebsiella pneumoniae (strain 342) protein is Adenylyl-sulfate kinase.